Consider the following 375-residue polypeptide: Proton-coupled zinc antiporter SLC30A8 (375 aa).

Residues methionine 1–lysine 68 are Cytoplasmic-facing. The Zn(2+) site is built by histidine 46, cysteine 47, and histidine 48. Residues histidine 46–histidine 48 carry the HCH Motif; seals regulatory zinc-binding pocket motif. A helical transmembrane segment spans residues leucine 69 to isoleucine 89. The Lumenal, vesicle segment spans residues alanine 90 to aspartate 98. The chain crosses the membrane as a helical span at residues alanine 99–serine 119. The Zn(2+) site is built by histidine 101 and aspartate 105. The Cytoplasmic segment spans residues serine 120–glutamate 135. A helical transmembrane segment spans residues isoleucine 136 to leucine 156. Residues alanine 157 to glycine 170 lie on the Lumenal, vesicle side of the membrane. Residues threonine 171–leucine 191 traverse the membrane as a helical segment. At histidine 192–alanine 223 the chain is on the cytoplasmic side. Residues phenylalanine 224–isoleucine 244 form a helical membrane-spanning segment. 2 residues coordinate Zn(2+): histidine 226 and aspartate 230. Residues tyrosine 245 to lysine 251 are Lumenal, vesicle-facing. A helical membrane pass occupies residues isoleucine 252–valine 272. At leucine 273–glutamine 375 the chain is on the cytoplasmic side. Residues histidine 307, histidine 324, histidine 351, glutamate 358, cysteine 367, and cysteine 370 each contribute to the Zn(2+) site.

It belongs to the cation diffusion facilitator (CDF) transporter (TC 2.A.4) family. SLC30A subfamily. In terms of assembly, homodimer.

It is found in the cytoplasmic vesicle. Its subcellular location is the secretory vesicle membrane. It localises to the cell membrane. The enzyme catalyses Zn(2+)(in) + 2 H(+)(out) = Zn(2+)(out) + 2 H(+)(in). Proton-coupled zinc ion antiporter mediating the entry of zinc into the lumen of pancreatic beta cell secretory granules, thereby regulating insulin secretion. This is Proton-coupled zinc antiporter SLC30A8 (slc30a8) from Xenopus laevis (African clawed frog).